The chain runs to 278 residues: Transmembrane protein 41A-B (278 aa).

A signal peptide spans 1–23; the sequence is MRSIWGLIVLVAAATFYLYLLSA. Helical transmembrane passes span 78–98, 101–121, 164–184, 191–211, and 230–250; these read GYVF…AIPG, FLNM…IACT, LFFF…FLNV, IPIP…NFIC, and WFTL…GALI.

Belongs to the TMEM41 family.

It localises to the membrane. This is Transmembrane protein 41A-B from Danio rerio (Zebrafish).